We begin with the raw amino-acid sequence, 247 residues long: Ribonuclease PH (247 aa).

Phosphate-binding positions include R90 and 128–130 (GTR).

It belongs to the RNase PH family. As to quaternary structure, homohexameric ring arranged as a trimer of dimers.

It catalyses the reaction tRNA(n+1) + phosphate = tRNA(n) + a ribonucleoside 5'-diphosphate. Its function is as follows. Phosphorolytic 3'-5' exoribonuclease that plays an important role in tRNA 3'-end maturation. Removes nucleotide residues following the 3'-CCA terminus of tRNAs; can also add nucleotides to the ends of RNA molecules by using nucleoside diphosphates as substrates, but this may not be physiologically important. Probably plays a role in initiation of 16S rRNA degradation (leading to ribosome degradation) during starvation. In Synechococcus sp. (strain CC9605), this protein is Ribonuclease PH.